Reading from the N-terminus, the 944-residue chain is Translation factor GUF1 homolog, mitochondrial (944 aa).

Residues 201 to 379 (KNVRNFCILA…IITDIPYPPI (179 aa)) form the tr-type G domain. Residues 210-217 (AHIDSGKS), 271-275 (DTPGH), and 325-328 (NKID) each bind GTP.

It belongs to the TRAFAC class translation factor GTPase superfamily. Classic translation factor GTPase family. LepA subfamily.

It localises to the mitochondrion inner membrane. It carries out the reaction GTP + H2O = GDP + phosphate + H(+). Functionally, promotes mitochondrial protein synthesis. May act as a fidelity factor of the translation reaction, by catalyzing a one-codon backward translocation of tRNAs on improperly translocated ribosomes. Binds to mitochondrial ribosomes in a GTP-dependent manner. This is Translation factor GUF1 homolog, mitochondrial from Plasmodium yoelii yoelii.